A 166-amino-acid chain; its full sequence is Putative pre-16S rRNA nuclease (166 aa).

The protein belongs to the YqgF nuclease family.

It is found in the cytoplasm. In terms of biological role, could be a nuclease involved in processing of the 5'-end of pre-16S rRNA. The chain is Putative pre-16S rRNA nuclease from Mesorhizobium japonicum (strain LMG 29417 / CECT 9101 / MAFF 303099) (Mesorhizobium loti (strain MAFF 303099)).